The chain runs to 20 residues: Conotoxin PnMLKM-D0211 (20 aa).

Residues 1–3 (VKR) constitute a propeptide that is removed on maturation. 3 disulfides stabilise this stretch: Cys4–Cys18, Cys5–Cys14, and Cys10–Cys17. Pro16 bears the 4-hydroxyproline mark. The residue at position 19 (Trp19) is a Tryptophan amide.

This sequence belongs to the conotoxin M superfamily. As to expression, expressed by the venom duct.

The protein localises to the secreted. This chain is Conotoxin PnMLKM-D0211, found in Conus pennaceus (Feathered cone).